Consider the following 313-residue polypeptide: Probable WRKY transcription factor 41 (313 aa).

Residues 135–203 constitute a DNA-binding region (WRKY); that stretch reads GLEGPHDDIF…YRGTHTCSQG (69 aa).

This sequence belongs to the WRKY group III family.

The protein resides in the nucleus. Its function is as follows. Transcription factor. Interacts specifically with the W box (5'-(T)TGAC[CT]-3'), a frequently occurring elicitor-responsive cis-acting element. The chain is Probable WRKY transcription factor 41 (WRKY41) from Arabidopsis thaliana (Mouse-ear cress).